The primary structure comprises 306 residues: tRNA pseudouridine synthase B (306 aa).

D47 serves as the catalytic Nucleophile.

This sequence belongs to the pseudouridine synthase TruB family. Type 1 subfamily.

It carries out the reaction uridine(55) in tRNA = pseudouridine(55) in tRNA. Its function is as follows. Responsible for synthesis of pseudouridine from uracil-55 in the psi GC loop of transfer RNAs. In Neisseria meningitidis serogroup A / serotype 4A (strain DSM 15465 / Z2491), this protein is tRNA pseudouridine synthase B.